The chain runs to 1666 residues: Probable clathrin heavy chain (1666 aa).

WD40-like repeat regions lie at residues 24 to 67, 68 to 107, 108 to 148, 149 to 194, 195 to 255, 256 to 299, and 300 to 328; these read SFGF…RPIS, ADSV…MNQD, VVYW…SSLN, GTQI…QPLE, SHAS…PEAV, NDFP…VSGE, and SIFV…VSIN. Thr-392 carries the post-translational modification Phosphothreonine. Ser-393 carries the post-translational modification Phosphoserine. CHCR repeat units follow at residues 534 to 680, 683 to 825, 830 to 969, 975 to 1120, 1124 to 1265, 1270 to 1415, and 1418 to 1561; these read MFNS…QIVV, ATRY…DEEL, LMSV…LLDQ, VPES…IPDA, YLKA…FRLA, LNLI…MLLT, and LAAL…YECF.

Belongs to the clathrin heavy chain family. As to quaternary structure, clathrin triskelions, composed of 3 heavy chains and 3 light chains, are the basic subunits of the clathrin coat.

It is found in the cytoplasmic vesicle membrane. The protein localises to the membrane. Its subcellular location is the coated pit. Its function is as follows. Clathrin is the major protein of the polyhedral coat of coated pits and vesicles. This Schizosaccharomyces pombe (strain 972 / ATCC 24843) (Fission yeast) protein is Probable clathrin heavy chain (chc1).